The following is a 193-amino-acid chain: Orotate phosphoribosyltransferase (193 aa).

5-phospho-alpha-D-ribose 1-diphosphate is bound by residues R107, K108, K111, H113, and 133–141 (EDVITSGGS). T137 and R165 together coordinate orotate.

This sequence belongs to the purine/pyrimidine phosphoribosyltransferase family. PyrE subfamily. Homodimer. Mg(2+) is required as a cofactor.

The enzyme catalyses orotidine 5'-phosphate + diphosphate = orotate + 5-phospho-alpha-D-ribose 1-diphosphate. Its pathway is pyrimidine metabolism; UMP biosynthesis via de novo pathway; UMP from orotate: step 1/2. Functionally, catalyzes the transfer of a ribosyl phosphate group from 5-phosphoribose 1-diphosphate to orotate, leading to the formation of orotidine monophosphate (OMP). The sequence is that of Orotate phosphoribosyltransferase from Rhodopirellula baltica (strain DSM 10527 / NCIMB 13988 / SH1).